Reading from the N-terminus, the 222-residue chain is PKHD-type hydroxylase Syncc9902_2001 (222 aa).

The Fe2OG dioxygenase domain occupies 80–174 (RVHSILISRS…RLVCVGWIES (95 aa)). 3 residues coordinate Fe cation: His-98, Asp-100, and His-155. Arg-165 contributes to the 2-oxoglutarate binding site.

It depends on Fe(2+) as a cofactor. The cofactor is L-ascorbate.

In Synechococcus sp. (strain CC9902), this protein is PKHD-type hydroxylase Syncc9902_2001.